The primary structure comprises 728 residues: Phosphoribosylformylglycinamidine synthase subunit PurL (728 aa).

His42 is a catalytic residue. The ATP site is built by Tyr45 and Lys84. Glu86 contacts Mg(2+). Substrate-binding positions include 87 to 90 (SHNH) and Arg109. The active-site Proton acceptor is His88. Position 110 (Asp110) interacts with Mg(2+). Gln237 contacts substrate. Asp265 provides a ligand contact to Mg(2+). Residue 309-311 (ESQ) coordinates substrate. ATP contacts are provided by Asp491 and Gly528. Asn529 is a Mg(2+) binding site. Ser531 serves as a coordination point for substrate.

Belongs to the FGAMS family. In terms of assembly, monomer. Part of the FGAM synthase complex composed of 1 PurL, 1 PurQ and 2 PurS subunits.

It localises to the cytoplasm. The catalysed reaction is N(2)-formyl-N(1)-(5-phospho-beta-D-ribosyl)glycinamide + L-glutamine + ATP + H2O = 2-formamido-N(1)-(5-O-phospho-beta-D-ribosyl)acetamidine + L-glutamate + ADP + phosphate + H(+). It participates in purine metabolism; IMP biosynthesis via de novo pathway; 5-amino-1-(5-phospho-D-ribosyl)imidazole from N(2)-formyl-N(1)-(5-phospho-D-ribosyl)glycinamide: step 1/2. Part of the phosphoribosylformylglycinamidine synthase complex involved in the purines biosynthetic pathway. Catalyzes the ATP-dependent conversion of formylglycinamide ribonucleotide (FGAR) and glutamine to yield formylglycinamidine ribonucleotide (FGAM) and glutamate. The FGAM synthase complex is composed of three subunits. PurQ produces an ammonia molecule by converting glutamine to glutamate. PurL transfers the ammonia molecule to FGAR to form FGAM in an ATP-dependent manner. PurS interacts with PurQ and PurL and is thought to assist in the transfer of the ammonia molecule from PurQ to PurL. The polypeptide is Phosphoribosylformylglycinamidine synthase subunit PurL (Campylobacter jejuni subsp. jejuni serotype O:6 (strain 81116 / NCTC 11828)).